Reading from the N-terminus, the 820-residue chain is Ribosome biogenesis protein ERB1 (820 aa).

Residues 1–111 (MVRSRSNSVK…SDAGDDEVDP (111 aa)) form a disordered region. The segment covering 9-19 (VKKDLKRKVDE) has biased composition (basic and acidic residues). Residues 20-48 (PVDVQDEFDVEGLIDEGDSDDEDEAEQEV) are compositionally biased toward acidic residues. The segment covering 53–64 (VTKDKKNTSKTE) has biased composition (basic and acidic residues). Residues 65–110 (NEEDADDESDSDAELEALIGEEEDLSGSELEDELAYFSDAGDDEVD) are compositionally biased toward acidic residues. A required for interaction with NOP7 region spans residues 282-395 (RFIPSKHEAK…LRHVPGYSES (114 aa)). The tract at residues 395–431 (SVRERFERSLDLYLAPRVRKNKLNIDPDSLIPDLPSP) is required for interaction with YTM1. WD repeat units follow at residues 447–486 (GHKGKVRAISVDPSGEFLATGGDDGTLRVWEVLTGRELYR) and 495–535 (AQDD…FDIE). The tract at residues 545–585 (GWGFAEGGREQQDIDTKGLDDDADSDSDDETGHVKKKSPPA) is disordered. Basic and acidic residues predominate over residues 551–564 (GGREQQDIDTKGLD). WD repeat units lie at residues 604–646 (TATK…SQSP), 649–687 (KSKGIVQDAMFHPFRPHLYVATQRYVRIYDLAKQVMAKK), 690–729 (PGARWVSSLDIHPRGDNVILSSFDKRLLWHDLDLSDKPYK), 733–773 (YHEK…DMMT), and 789–820 (KSGLGILRVEWHPREAWLFSAAADGTAKLWTT).

The protein belongs to the WD repeat BOP1/ERB1 family. As to quaternary structure, component of the NOP7 complex, composed of ERB1, NOP7 and YTM1. The complex is held together by ERB1, which interacts with NOP7 via its N-terminal domain and with YTM1 via a high-affinity interaction between the seven-bladed beta-propeller domains of the 2 proteins. The NOP7 complex associates with the 66S pre-ribosome.

The protein localises to the nucleus. It is found in the nucleolus. The protein resides in the nucleoplasm. Component of the NOP7 complex, which is required for maturation of the 25S and 5.8S ribosomal RNAs and formation of the 60S ribosome. This chain is Ribosome biogenesis protein ERB1, found in Yarrowia lipolytica (strain CLIB 122 / E 150) (Yeast).